The chain runs to 144 residues: 3-hydroxyacyl-[acyl-carrier-protein] dehydratase FabZ (144 aa).

The active site involves His48.

Belongs to the thioester dehydratase family. FabZ subfamily.

The protein localises to the cytoplasm. The catalysed reaction is a (3R)-hydroxyacyl-[ACP] = a (2E)-enoyl-[ACP] + H2O. In terms of biological role, involved in unsaturated fatty acids biosynthesis. Catalyzes the dehydration of short chain beta-hydroxyacyl-ACPs and long chain saturated and unsaturated beta-hydroxyacyl-ACPs. The polypeptide is 3-hydroxyacyl-[acyl-carrier-protein] dehydratase FabZ (Bacillus cereus (strain AH187)).